Here is a 232-residue protein sequence, read N- to C-terminus: U2 small nuclear ribonucleoprotein B'' (232 aa).

An RRM 1 domain is found at 10 to 89 (QSIYIQNLNE…KPMRLQYAKA (80 aa)). The tract at residues 100–157 (TFVPKDKKRKQEEKVERKREDSQRPNTANGPSANGPSANNGVPAPSFQPSGQETMPPN) is disordered. The segment covering 108-122 (RKQEEKVERKREDSQ) has biased composition (basic and acidic residues). Composition is skewed to polar residues over residues 123–139 (RPNTANGPSANGPSANN) and 146–156 (FQPSGQETMPP). The region spanning 158–232 (NILFIQNLPH…NPMVISFAKK (75 aa)) is the RRM 2 domain.

Belongs to the RRM U1 A/B'' family. Component of the spliceosome where it is associated with snRNP U2.

It is found in the nucleus. Its subcellular location is the cajal body. It localises to the nucleoplasm. The protein resides in the cytoplasm. Functionally, involved in nuclear pre-mRNA splicing. This Arabidopsis thaliana (Mouse-ear cress) protein is U2 small nuclear ribonucleoprotein B'' (U2B'').